The primary structure comprises 335 residues: Phosphate acyltransferase (335 aa).

The protein belongs to the PlsX family. Homodimer. Probably interacts with PlsY.

It is found in the cytoplasm. The enzyme catalyses a fatty acyl-[ACP] + phosphate = an acyl phosphate + holo-[ACP]. It participates in lipid metabolism; phospholipid metabolism. In terms of biological role, catalyzes the reversible formation of acyl-phosphate (acyl-PO(4)) from acyl-[acyl-carrier-protein] (acyl-ACP). This enzyme utilizes acyl-ACP as fatty acyl donor, but not acyl-CoA. The sequence is that of Phosphate acyltransferase from Leptospira interrogans serogroup Icterohaemorrhagiae serovar copenhageni (strain Fiocruz L1-130).